The sequence spans 254 residues: 3-deoxy-manno-octulosonate cytidylyltransferase (254 aa).

It belongs to the KdsB family.

The protein localises to the cytoplasm. It catalyses the reaction 3-deoxy-alpha-D-manno-oct-2-ulosonate + CTP = CMP-3-deoxy-beta-D-manno-octulosonate + diphosphate. The protein operates within nucleotide-sugar biosynthesis; CMP-3-deoxy-D-manno-octulosonate biosynthesis; CMP-3-deoxy-D-manno-octulosonate from 3-deoxy-D-manno-octulosonate and CTP: step 1/1. It participates in bacterial outer membrane biogenesis; lipopolysaccharide biosynthesis. Activates KDO (a required 8-carbon sugar) for incorporation into bacterial lipopolysaccharide in Gram-negative bacteria. In Tolumonas auensis (strain DSM 9187 / NBRC 110442 / TA 4), this protein is 3-deoxy-manno-octulosonate cytidylyltransferase.